The chain runs to 237 residues: Uridylate kinase (237 aa).

12–15 (KLSG) is an ATP binding site. Residues 20 to 25 (GEDGLG) form an involved in allosteric activation by GTP region. Residue G54 participates in UMP binding. ATP-binding residues include G55 and R59. Residues D74 and 135 to 142 (TGNPFFTT) each bind UMP. The ATP site is built by T162, Y168, and D171.

Belongs to the UMP kinase family. Homohexamer.

The protein resides in the cytoplasm. It carries out the reaction UMP + ATP = UDP + ADP. Its pathway is pyrimidine metabolism; CTP biosynthesis via de novo pathway; UDP from UMP (UMPK route): step 1/1. Its activity is regulated as follows. Allosterically activated by GTP. Inhibited by UTP. Its function is as follows. Catalyzes the reversible phosphorylation of UMP to UDP. The protein is Uridylate kinase of Haemophilus influenzae (strain PittEE).